Consider the following 191-residue polypeptide: Adenylate kinase (191 aa).

ATP is bound at residue 12–17; the sequence is GSGKTT. Positions 34–63 are NMP; sequence STGDLLRAESAKKTERGLLIEKFTSQGELV. Residues T35, R40, 61 to 63, 88 to 91, and Q95 contribute to the AMP site; these read ELV and GYPR. The interval 130–136 is LID; it reads GRSRGAD. R131 is a binding site for ATP. AMP contacts are provided by R133 and R145. R173 is a binding site for ATP.

Belongs to the adenylate kinase family. Monomer.

The protein localises to the cytoplasm. It catalyses the reaction AMP + ATP = 2 ADP. The protein operates within purine metabolism; AMP biosynthesis via salvage pathway; AMP from ADP: step 1/1. Its function is as follows. Catalyzes the reversible transfer of the terminal phosphate group between ATP and AMP. Plays an important role in cellular energy homeostasis and in adenine nucleotide metabolism. This chain is Adenylate kinase, found in Helicobacter pylori (strain Shi470).